The primary structure comprises 1163 residues: Pesticidal crystal protein Cry26Aa (1163 aa).

This sequence belongs to the delta endotoxin family.

Promotes colloidosmotic lysis by binding to the midgut epithelial cells of insects. This chain is Pesticidal crystal protein Cry26Aa (cry26Aa), found in Bacillus thuringiensis subsp. finitimus.